The primary structure comprises 326 residues: Glyoxylate/hydroxypyruvate reductase B (326 aa).

Catalysis depends on residues Arg-237 and Glu-266. The active-site Proton donor is His-285.

This sequence belongs to the D-isomer specific 2-hydroxyacid dehydrogenase family. GhrB subfamily. Homodimer.

The protein resides in the cytoplasm. The enzyme catalyses glycolate + NADP(+) = glyoxylate + NADPH + H(+). The catalysed reaction is (R)-glycerate + NAD(+) = 3-hydroxypyruvate + NADH + H(+). It catalyses the reaction (R)-glycerate + NADP(+) = 3-hydroxypyruvate + NADPH + H(+). In terms of biological role, catalyzes the NADPH-dependent reduction of glyoxylate and hydroxypyruvate into glycolate and glycerate, respectively. The sequence is that of Glyoxylate/hydroxypyruvate reductase B from Yersinia pseudotuberculosis serotype O:1b (strain IP 31758).